We begin with the raw amino-acid sequence, 458 residues long: ATP synthase subunit beta (458 aa).

148–155 (GGAGVGKT) contacts ATP.

It belongs to the ATPase alpha/beta chains family. F-type ATPases have 2 components, CF(1) - the catalytic core - and CF(0) - the membrane proton channel. CF(1) has five subunits: alpha(3), beta(3), gamma(1), delta(1), epsilon(1). CF(0) has three main subunits: a(1), b(2) and c(9-12). The alpha and beta chains form an alternating ring which encloses part of the gamma chain. CF(1) is attached to CF(0) by a central stalk formed by the gamma and epsilon chains, while a peripheral stalk is formed by the delta and b chains.

It is found in the cell inner membrane. It carries out the reaction ATP + H2O + 4 H(+)(in) = ADP + phosphate + 5 H(+)(out). Produces ATP from ADP in the presence of a proton gradient across the membrane. The catalytic sites are hosted primarily by the beta subunits. This is ATP synthase subunit beta from Pseudomonas fluorescens (strain SBW25).